Reading from the N-terminus, the 892-residue chain is Alanine--tRNA ligase (892 aa).

The Zn(2+) site is built by H574, H578, C677, and H681.

It belongs to the class-II aminoacyl-tRNA synthetase family. Zn(2+) serves as cofactor.

The protein localises to the cytoplasm. It catalyses the reaction tRNA(Ala) + L-alanine + ATP = L-alanyl-tRNA(Ala) + AMP + diphosphate. In terms of biological role, catalyzes the attachment of alanine to tRNA(Ala) in a two-step reaction: alanine is first activated by ATP to form Ala-AMP and then transferred to the acceptor end of tRNA(Ala). Also edits incorrectly charged Ser-tRNA(Ala) and Gly-tRNA(Ala) via its editing domain. The sequence is that of Alanine--tRNA ligase from Mesoplasma florum (strain ATCC 33453 / NBRC 100688 / NCTC 11704 / L1) (Acholeplasma florum).